The sequence spans 247 residues: Adenosylcobinamide-GDP ribazoletransferase (247 aa).

5 helical membrane-spanning segments follow: residues 1–21 (MLRL…PFSF), 37–57 (LVGL…ALAL), 61–81 (VADL…HLDG), 109–129 (AVGV…LFAV), and 176–196 (VAVA…LPGI).

It belongs to the CobS family. The cofactor is Mg(2+).

Its subcellular location is the cell inner membrane. It catalyses the reaction alpha-ribazole + adenosylcob(III)inamide-GDP = adenosylcob(III)alamin + GMP + H(+). The enzyme catalyses alpha-ribazole 5'-phosphate + adenosylcob(III)inamide-GDP = adenosylcob(III)alamin 5'-phosphate + GMP + H(+). The protein operates within cofactor biosynthesis; adenosylcobalamin biosynthesis; adenosylcobalamin from cob(II)yrinate a,c-diamide: step 7/7. Its function is as follows. Joins adenosylcobinamide-GDP and alpha-ribazole to generate adenosylcobalamin (Ado-cobalamin). Also synthesizes adenosylcobalamin 5'-phosphate from adenosylcobinamide-GDP and alpha-ribazole 5'-phosphate. This Geotalea daltonii (strain DSM 22248 / JCM 15807 / FRC-32) (Geobacter daltonii) protein is Adenosylcobinamide-GDP ribazoletransferase.